The primary structure comprises 264 residues: Tryptophan synthase alpha chain (264 aa).

Residues E45 and D56 each act as proton acceptor in the active site.

It belongs to the TrpA family. In terms of assembly, tetramer of two alpha and two beta chains.

It carries out the reaction (1S,2R)-1-C-(indol-3-yl)glycerol 3-phosphate + L-serine = D-glyceraldehyde 3-phosphate + L-tryptophan + H2O. The protein operates within amino-acid biosynthesis; L-tryptophan biosynthesis; L-tryptophan from chorismate: step 5/5. Its function is as follows. The alpha subunit is responsible for the aldol cleavage of indoleglycerol phosphate to indole and glyceraldehyde 3-phosphate. The protein is Tryptophan synthase alpha chain of Leptospira interrogans serogroup Icterohaemorrhagiae serovar copenhageni (strain Fiocruz L1-130).